Here is a 37-residue protein sequence, read N- to C-terminus: Large ribosomal subunit protein bL36c (37 aa).

The protein belongs to the bacterial ribosomal protein bL36 family.

It is found in the plastid. Its subcellular location is the chloroplast. The polypeptide is Large ribosomal subunit protein bL36c (Psilotum nudum (Whisk fern)).